The chain runs to 1308 residues: MQCLAAALKDETNMSGGGEQADILPANYVVKDRWKVLKKIGGGGFGEIYEAMDLLTRENVALKVESAQQPKQVLKMEVAVLKKLQGKDHVCRFIGCGRNEKFNYVVMQLQGRNLADLRRSQPRGTFTLSTTLRLGKQILESIEAIHSVGFLHRDIKPSNFAMGRLPSTYRKCYMLDFGLARQYTNTTGDVRPPRNVAGFRGTVRYASVNAHKNREMGRHDDLWSLFYMLVEFAVGQLPWRKIKDKEQVGMIKEKYEHRMLLKHMPSEFHLFLDHIASLDYFTKPDYQLIMSVFENSMKERGIAENEAFDWEKAGTDALLSTSTSTPPQQNTRQTAAMFGVVNVTPVPGDLLRENTEDVLQGEHLSDQENAPPILPGRPPEGLGPGPHLVPHPGGPEAEVWEETDVNRNKLRINIGKTPCVEEEQSRGVGVPSSPVRAPPDSPTTPVRSLCYRRVNSPESERLSTAADGRVELQERRSRMDLPGSPSRQACSSQPAQMLSVDTGHADRQASGRMDVSASVEQEALSNAFRSVPLAEEEDFDSKEWVIIDKETELKDFPPGAEPSTSGTTDEEPEELRPLPEEGEERRRLGTEPTVRPRGRGMHTLTEEDPRQMLPQPAPPQLSQADGRSETSQPPTPGSPSHSPLHSGPRPRRRESDPTGPQRQVFSVAPPFEVNGLPRAVPLALPYQDFKRDLSDYRERARLLNRVRRVGFSHMLLTAPQVPLAPFQPQANGKEGEEEEEEEEEEEEEEEEEEEEEEEEEEEEEEEEEAGALGEVLGPRSGSSSEGSERSTERSQEGAPSTLLADDQKEARGRASMADGDLEPEEGSKTLVLVSPGDMKKSPVTAELAPDPDLGTLAALTPQHERPQPTGSQLDVSEPGTLSSILKSEPKPSGPGAGGGVGLVAPGAGVTAVTSPFTKVERTFVHIAEKSHLNVMSSGGQASRPEELSTGGELGLEVLSEGGIAEEGAPAPLENGMALAGLDGTEMESCALSGPPGETPSEVVTDSLPNGPALADGPAPASQQEPVTKKGTTISPSRHAMPGSRPRSRIPVLLSEEDTGSEPSGSLSAKERWSKRARPQQDLARLVMEKRQGRLLLRLASGASSSSSEEQRRASETLSGTGSEEDTPASEPTTALPRKAVRAATTRSRIPRPISVSMPVEGQQLPGRPHGAASATDLAITSRLQLQKPSGLAPAADLRPKQSASRGPGPGRAQVSKPAAPRSPGLPASTARHPSGSPRSQSLSRKESSSPSHQARPGVPPSRGVLQVRSQPEASPVAPKKGPKGKQLQTQRAATKGRAVVSEGRPGAR.

Residues 34-297 (WKVLKKIGGG…LIMSVFENSM (264 aa)) enclose the Protein kinase domain. ATP is bound by residues 40-48 (IGGGGFGEI) and lysine 63. Aspartate 154 acts as the Proton acceptor in catalysis. Disordered regions lie at residues 364 to 397 (LSDQ…GPEA), 418 to 448 (PCVE…PVRS), 474 to 671 (ERRS…APPF), 720 to 899 (QVPL…AGGG), 985 to 1085 (EMES…LARL), and 1097 to 1308 (RLAS…PGAR). Phosphoserine is present on serine 441. The segment covering 485 to 496 (PSRQACSSQPAQ) has biased composition (polar residues). Serine 541 is modified (phosphoserine). Composition is skewed to basic and acidic residues over residues 541–555 (SKEW…ELKD) and 574–589 (ELRP…RRLG). Low complexity predominate over residues 638-647 (SPSHSPLHSG). A compositionally biased stretch (acidic residues) spans 735–769 (GEEEEEEEEEEEEEEEEEEEEEEEEEEEEEEEEEA). Positions 786-795 (GSERSTERSQ) are enriched in basic and acidic residues. 2 stretches are compositionally biased toward polar residues: residues 868-885 (PTGS…SSIL) and 1020-1035 (ASQQ…TISP). A compositionally biased stretch (low complexity) spans 1097-1107 (RLASGASSSSS).

Belongs to the protein kinase superfamily. CK1 Ser/Thr protein kinase family. It depends on Mg(2+) as a cofactor. Requires Mn(2+) as cofactor. Expressed in the brain. Strong expression in the cortical layers, the CA1 layers of the hippocampus and the granular layer of the cerebellum. Also expressed in the large cortical pyramidal cells in the temporal cortex, the CA1 pyramidal neurons and the cerebellum granular neurons.

The protein localises to the cytoplasm. The catalysed reaction is L-seryl-[protein] + ATP = O-phospho-L-seryl-[protein] + ADP + H(+). The enzyme catalyses L-threonyl-[protein] + ATP = O-phospho-L-threonyl-[protein] + ADP + H(+). Functionally, serine/threonine kinase which is able to phosphorylate TAU on serine, threonine and tyrosine residues. Induces aggregation of TAU. In Mus musculus (Mouse), this protein is Tau-tubulin kinase 1 (Ttbk1).